We begin with the raw amino-acid sequence, 771 residues long: DNA polymerase 1 (771 aa).

Belongs to the DNA polymerase type-B family.

It carries out the reaction DNA(n) + a 2'-deoxyribonucleoside 5'-triphosphate = DNA(n+1) + diphosphate. This Pyrococcus abyssi protein is DNA polymerase 1 (polI).